Consider the following 362-residue polypeptide: Phosphoserine aminotransferase (362 aa).

Serine 9 and arginine 42 together coordinate L-glutamate. Pyridoxal 5'-phosphate-binding positions include 76-77 (GR), tryptophan 102, threonine 153, aspartate 174, and glutamine 197. Lysine 198 bears the N6-(pyridoxal phosphate)lysine mark. 239–240 (NT) is a pyridoxal 5'-phosphate binding site.

It belongs to the class-V pyridoxal-phosphate-dependent aminotransferase family. SerC subfamily. In terms of assembly, homodimer. The cofactor is pyridoxal 5'-phosphate.

The protein localises to the cytoplasm. It carries out the reaction O-phospho-L-serine + 2-oxoglutarate = 3-phosphooxypyruvate + L-glutamate. The enzyme catalyses 4-(phosphooxy)-L-threonine + 2-oxoglutarate = (R)-3-hydroxy-2-oxo-4-phosphooxybutanoate + L-glutamate. Its pathway is amino-acid biosynthesis; L-serine biosynthesis; L-serine from 3-phospho-D-glycerate: step 2/3. The protein operates within cofactor biosynthesis; pyridoxine 5'-phosphate biosynthesis; pyridoxine 5'-phosphate from D-erythrose 4-phosphate: step 3/5. In terms of biological role, catalyzes the reversible conversion of 3-phosphohydroxypyruvate to phosphoserine and of 3-hydroxy-2-oxo-4-phosphonooxybutanoate to phosphohydroxythreonine. In Escherichia coli O6:K15:H31 (strain 536 / UPEC), this protein is Phosphoserine aminotransferase.